We begin with the raw amino-acid sequence, 273 residues long: 3-((Z)-2-isocyanoethenyl)-1H-indole synthase (273 aa).

Residues His-105, Asp-107, and His-254 each contribute to the Fe cation site.

Belongs to the TfdA dioxygenase family. It depends on Fe(2+) as a cofactor.

The catalysed reaction is (2S)-3-(1H-indol-3-yl)-2-isocyanopropanoate + 2-oxoglutarate + O2 + H(+) = 3-[(Z)-2-isocyanoethenyl]-1H-indole + succinate + 2 CO2 + H2O. Its function is as follows. Involved in the biosynthesis of ambiguines, a family of hapalindole-type alkaloids. Responsible for the synthesis of Z-3-(2-isocyanoethen)-indole, a biosynthetic precursor to all ambiguines. The polypeptide is 3-((Z)-2-isocyanoethenyl)-1H-indole synthase (Fischerella ambigua (strain UTEX 1903)).